We begin with the raw amino-acid sequence, 235 residues long: Ribonuclease 3 (235 aa).

One can recognise an RNase III domain in the interval 6 to 135 (LISLEKILGF…VIGAVYFDCG (130 aa)). A Mg(2+)-binding site is contributed by Glu-48. Asp-52 is a catalytic residue. Residues Asn-121 and Glu-124 each contribute to the Mg(2+) site. Glu-124 is a catalytic residue. In terms of domain architecture, DRBM spans 162 to 231 (DEKTTLQELL…AKKALELLKN (70 aa)).

It belongs to the ribonuclease III family. As to quaternary structure, homodimer. The cofactor is Mg(2+).

The protein resides in the cytoplasm. The enzyme catalyses Endonucleolytic cleavage to 5'-phosphomonoester.. In terms of biological role, digests double-stranded RNA. Involved in the processing of primary rRNA transcript to yield the immediate precursors to the large and small rRNAs (23S and 16S). Processes some mRNAs, and tRNAs when they are encoded in the rRNA operon. Processes pre-crRNA and tracrRNA of type II CRISPR loci if present in the organism. This is Ribonuclease 3 from Carboxydothermus hydrogenoformans (strain ATCC BAA-161 / DSM 6008 / Z-2901).